We begin with the raw amino-acid sequence, 190 residues long: Xanthine phosphoribosyltransferase (190 aa).

Residues leucine 20 and asparagine 27 each coordinate xanthine. A 5-phospho-alpha-D-ribose 1-diphosphate-binding site is contributed by 129–133; it reads ASGSA. Residue lysine 157 participates in xanthine binding.

This sequence belongs to the purine/pyrimidine phosphoribosyltransferase family. Xpt subfamily. As to quaternary structure, homodimer.

It localises to the cytoplasm. The catalysed reaction is XMP + diphosphate = xanthine + 5-phospho-alpha-D-ribose 1-diphosphate. The protein operates within purine metabolism; XMP biosynthesis via salvage pathway; XMP from xanthine: step 1/1. Functionally, converts the preformed base xanthine, a product of nucleic acid breakdown, to xanthosine 5'-monophosphate (XMP), so it can be reused for RNA or DNA synthesis. This Clostridium tetani (strain Massachusetts / E88) protein is Xanthine phosphoribosyltransferase.